A 259-amino-acid polypeptide reads, in one-letter code: tRNA pseudouridine synthase A (259 aa).

Asp51 (nucleophile) is an active-site residue. A substrate-binding site is contributed by Tyr109.

Belongs to the tRNA pseudouridine synthase TruA family. As to quaternary structure, homodimer.

It catalyses the reaction uridine(38/39/40) in tRNA = pseudouridine(38/39/40) in tRNA. Formation of pseudouridine at positions 38, 39 and 40 in the anticodon stem and loop of transfer RNAs. The sequence is that of tRNA pseudouridine synthase A from Colwellia psychrerythraea (strain 34H / ATCC BAA-681) (Vibrio psychroerythus).